Consider the following 806-residue polypeptide: Glycerol-3-phosphate acyltransferase (806 aa).

The short motif at 305 to 310 (CHRSHM) is the HXXXXD motif element.

Belongs to the GPAT/DAPAT family.

It is found in the cell inner membrane. The enzyme catalyses sn-glycerol 3-phosphate + an acyl-CoA = a 1-acyl-sn-glycero-3-phosphate + CoA. It participates in phospholipid metabolism; CDP-diacylglycerol biosynthesis; CDP-diacylglycerol from sn-glycerol 3-phosphate: step 1/3. In Salmonella paratyphi A (strain ATCC 9150 / SARB42), this protein is Glycerol-3-phosphate acyltransferase.